The sequence spans 513 residues: ATP synthase subunit alpha 1 (513 aa).

Position 169-176 (169-176) interacts with ATP; it reads GDRQCGKT.

Belongs to the ATPase alpha/beta chains family. F-type ATPases have 2 components, CF(1) - the catalytic core - and CF(0) - the membrane proton channel. CF(1) has five subunits: alpha(3), beta(3), gamma(1), delta(1), epsilon(1). CF(0) has three main subunits: a(1), b(2) and c(9-12). The alpha and beta chains form an alternating ring which encloses part of the gamma chain. CF(1) is attached to CF(0) by a central stalk formed by the gamma and epsilon chains, while a peripheral stalk is formed by the delta and b chains.

The protein localises to the cell inner membrane. It carries out the reaction ATP + H2O + 4 H(+)(in) = ADP + phosphate + 5 H(+)(out). In terms of biological role, produces ATP from ADP in the presence of a proton gradient across the membrane. The alpha chain is a regulatory subunit. This chain is ATP synthase subunit alpha 1, found in Burkholderia thailandensis (strain ATCC 700388 / DSM 13276 / CCUG 48851 / CIP 106301 / E264).